A 298-amino-acid polypeptide reads, in one-letter code: DDRGK domain-containing protein 1 (298 aa).

Residues 1–2 (ME) lie on the Lumenal side of the membrane. Residues 3–23 (EIFALIVSMILIVAVIPLFFW) form a helical membrane-spanning segment. At 24 to 298 (KRRRDARSRE…ISGMEEISVS (275 aa)) the chain is on the cytoplasmic side. The tract at residues 31–155 (SREEVAEPPQ…EEEKARQAKE (125 aa)) is disordered. Positions 101-155 (KRQEREAQRQAEEATRESRNTKQDWYAEMRRKKDEEREAEELKLEEEEKARQAKE) are enriched in basic and acidic residues.

This sequence belongs to the DDRGK1 family.

The protein resides in the endoplasmic reticulum membrane. Substrate adapter for ufmylation, the covalent attachment of the ubiquitin-like modifier UFM1 to substrate proteins. This is DDRGK domain-containing protein 1 from Arabidopsis thaliana (Mouse-ear cress).